An 81-amino-acid polypeptide reads, in one-letter code: Exodeoxyribonuclease 7 small subunit (81 aa).

The segment covering 60-70 (LVDKDGNEKAL) has biased composition (basic and acidic residues). The segment at 60-81 (LVDKDGNEKALDPQNASAPEEE) is disordered.

It belongs to the XseB family. As to quaternary structure, heterooligomer composed of large and small subunits.

It is found in the cytoplasm. The enzyme catalyses Exonucleolytic cleavage in either 5'- to 3'- or 3'- to 5'-direction to yield nucleoside 5'-phosphates.. Functionally, bidirectionally degrades single-stranded DNA into large acid-insoluble oligonucleotides, which are then degraded further into small acid-soluble oligonucleotides. The polypeptide is Exodeoxyribonuclease 7 small subunit (Lactobacillus johnsonii (strain CNCM I-12250 / La1 / NCC 533)).